Reading from the N-terminus, the 367-residue chain is Nodulation protein NolF (367 aa).

It belongs to the membrane fusion protein (MFP) (TC 8.A.1) family.

Functionally, involved in the production of Medicago-specific nodulation signal molecule. This is Nodulation protein NolF (nolF) from Rhizobium meliloti (strain 1021) (Ensifer meliloti).